We begin with the raw amino-acid sequence, 334 residues long: D-aspartate oxidase 2 (334 aa).

The FAD site is built by aspartate 38, lysine 39, serine 46, glycine 310, and threonine 315.

It belongs to the DAMOX/DASOX family. FAD is required as a cofactor. Expressed in the intestinal cells, pharyngeal muscles, and body wall muscles in adult hermaphrodites.

It is found in the cytoplasm. The enzyme catalyses D-aspartate + O2 + H2O = oxaloacetate + H2O2 + NH4(+). It carries out the reaction D-glutamate + O2 + H2O = H2O2 + 2-oxoglutarate + NH4(+). With respect to regulation, inhibited by thiolactomycin. Its function is as follows. Selectively catalyzes the oxidative deamination of acidic amino acids. May play a role in the egg-laying events and early development of the worm, in addition to quality control of the germ cells. The protein is D-aspartate oxidase 2 (ddo-2) of Caenorhabditis elegans.